Consider the following 147-residue polypeptide: MPSLLLINGPNLNLLGTREPHLYGATTLRDVEEMSRVQANNYGIDLETFQSNHEGHIIDRIHSARGHIDVIIINPGALTHTSVGLRDALVGVSIPFIEVHITNVHAREPFRHHSYLSDKASAILVGLGTYGYEAAIQHAAKNMIRKN.

The Proton acceptor role is filled by tyrosine 23. Substrate contacts are provided by asparagine 74, histidine 80, and aspartate 87. Catalysis depends on histidine 100, which acts as the Proton donor. Residues 101–102 and arginine 111 each bind substrate; that span reads IT.

This sequence belongs to the type-II 3-dehydroquinase family. As to quaternary structure, homododecamer. Adopts a ring-like structure, composed of an arrangement of two hexameric rings stacked on top of one another.

It catalyses the reaction 3-dehydroquinate = 3-dehydroshikimate + H2O. It functions in the pathway aromatic compound metabolism; 3,4-dihydroxybenzoate biosynthesis; 3,4-dihydroxybenzoate from 3-dehydroquinate: step 1/2. Is involved in the catabolism of quinate. Allows the utilization of quinate as carbon source via the beta-ketoadipate pathway. The polypeptide is Catabolic 3-dehydroquinase 2 (Aspergillus terreus (strain NIH 2624 / FGSC A1156)).